The primary structure comprises 3971 residues: Mycosubtilin synthase subunit A (3971 aa).

The segment at 160–479 (EPEADELAFI…ELEDIDLGRV (320 aa)) is acyl-CoA ligase. In terms of domain architecture, Carrier 1 spans 578–653 (TPIHEIETAL…DLAAFLVENH (76 aa)). An O-(pantetheine 4'-phosphoryl)serine modification is found at S613. The Ketosynthase family 3 (KS3) domain occupies 669 to 1092 (SKDIAIIGMS…GTNAHVVLEE (424 aa)). Catalysis depends on for beta-ketoacyl synthase activity residues C843, H974, and H1014. In terms of domain architecture, Carrier 2 spans 1290–1365 (THIESFLKTV…SVVDYLAENV (76 aa)). Position 1324 is an O-(pantetheine 4'-phosphoryl)serine (S1324). Residues 1434–1456 (ESEISQDKTSLSPKSVTAKKNSA) are disordered. Residues 1440–1456 (DKTSLSPKSVTAKKNSA) are compositionally biased toward polar residues. The segment at 1529-1856 (IIAERSDGSR…SYFEQSQVPI (328 aa)) is GSA-AT. At K1759 the chain carries N6-(pyridoxal phosphate)lysine. The segment at 1921–1942 (GGFIPEGPDSPNDGGHKEPETY) is disordered. Positions 1938–2240 (EPETYELSPE…NMVPVKNTAS (303 aa)) are condensation 1. The region spanning 2405–2480 (EPENETELQI…ELANFIRGEK (76 aa)) is the Carrier 3 domain. S2440 is subject to O-(pantetheine 4'-phosphoryl)serine. The segment at 2492-2781 (QKAFYRTSPA…QTMGIRTKPQ (290 aa)) is condensation 2. Residues 2937 to 3823 (PHNDTVCQWF…RNHPAGRKIF (887 aa)) are domain 1 (asparagine-activating). Residues 2967–3364 (TYGQLNERVN…KVEAVQKAVV (398 aa)) form an adenylation 1 region. The Carrier 4 domain occupies 3442–3517 (PPGNEVESKL…QLANMALRME (76 aa)). S3477 is modified (O-(pantetheine 4'-phosphoryl)serine). Residues 3529-3818 (KISYYPVSSA…NTLVIRNHPA (290 aa)) are condensation 3.

This sequence belongs to the ATP-dependent AMP-binding enzyme family. Pyridoxal 5'-phosphate serves as cofactor. It depends on pantetheine 4'-phosphate as a cofactor.

Its function is as follows. This protein is a multifunctional enzyme, able to activate a long chain fatty acid and link it with the amino acid Asn as part of the synthesis of mycosubtilin. The activation sites consist of individual domains. This chain is Mycosubtilin synthase subunit A (mycA), found in Bacillus subtilis.